The sequence spans 239 residues: Probable transcriptional regulatory protein Aave_3203 (239 aa).

The tract at residues 1–20 (MAGHSKWANIQHRKGRQDEK) is disordered.

This sequence belongs to the TACO1 family.

Its subcellular location is the cytoplasm. This chain is Probable transcriptional regulatory protein Aave_3203, found in Paracidovorax citrulli (strain AAC00-1) (Acidovorax citrulli).